The chain runs to 138 residues: Large ribosomal subunit protein uL16 (138 aa).

Basic residues predominate over residues 1 to 16 (MLIPRRVKHRKQHHPG). Residues 1-25 (MLIPRRVKHRKQHHPGRSGQATGGT) are disordered.

Belongs to the universal ribosomal protein uL16 family. In terms of assembly, part of the 50S ribosomal subunit.

Binds 23S rRNA and is also seen to make contacts with the A and possibly P site tRNAs. The polypeptide is Large ribosomal subunit protein uL16 (Renibacterium salmoninarum (strain ATCC 33209 / DSM 20767 / JCM 11484 / NBRC 15589 / NCIMB 2235)).